The primary structure comprises 226 residues: MTLPNVEWAVSPGLTPYQPALAFMEARAAAIAAGEANELVWLLEHPPLYTAGTSAKAGDLLSPDRFPVYETGRGGEYTYHGPGQRVAYVMLDLTRRGRDVRKFIQSLENWLIGAAAQFGIKAGIRDGRVGVWVDRSGGREDKIAAIGVRLRRWVSFHGIAFNVDPDLSHFGGITPCGISDPRFGVTSLADLGHTVDMADFDTALHLAWTEAFGPVRRADAPELVPD.

Residues glycine 34–arginine 216 enclose the BPL/LPL catalytic domain. Residues arginine 73–histidine 80, alanine 145–glycine 147, and glycine 158–alanine 160 contribute to the substrate site. Cysteine 176 functions as the Acyl-thioester intermediate in the catalytic mechanism.

Belongs to the LipB family.

It localises to the cytoplasm. It carries out the reaction octanoyl-[ACP] + L-lysyl-[protein] = N(6)-octanoyl-L-lysyl-[protein] + holo-[ACP] + H(+). It participates in protein modification; protein lipoylation via endogenous pathway; protein N(6)-(lipoyl)lysine from octanoyl-[acyl-carrier-protein]: step 1/2. In terms of biological role, catalyzes the transfer of endogenously produced octanoic acid from octanoyl-acyl-carrier-protein onto the lipoyl domains of lipoate-dependent enzymes. Lipoyl-ACP can also act as a substrate although octanoyl-ACP is likely to be the physiological substrate. This is Octanoyltransferase from Maricaulis maris (strain MCS10) (Caulobacter maris).